Here is a 197-residue protein sequence, read N- to C-terminus: CASP-like protein 1B2 (197 aa).

Residue A2 is modified to N-acetylalanine. Residues 2-17 (AREKIVVAGGSTKSWK) lie on the Cytoplasmic side of the membrane. A helical membrane pass occupies residues 18–38 (LLLGLRVFAFMATLAAAIVMS). The Extracellular segment spans residues 39-69 (LNKETKTLVVATIGTLPIKATLTAKFQDTPA). A helical transmembrane segment spans residues 70-90 (FVFFVIANVMVSFHNLLMIVL). Topologically, residues 91–106 (QIFSRKLEYKGVRLLS) are cytoplasmic. Residues 107-127 (IAILDMLNATLVSAAANAAVF) form a helical membrane-spanning segment. The Extracellular portion of the chain corresponds to 128–156 (VAELGKNGNKHAKWNKVCDRFATYCDHGA). The helical transmembrane segment at 157-177 (GALIAAFAGVILMLLVSSVSI) threads the bilayer. Residues 178 to 197 (SRLLINSKHLSTTATTTAVV) are Cytoplasmic-facing.

Belongs to the Casparian strip membrane proteins (CASP) family. As to quaternary structure, homodimer and heterodimers.

Its subcellular location is the cell membrane. The sequence is that of CASP-like protein 1B2 from Arabidopsis lyrata subsp. lyrata (Lyre-leaved rock-cress).